The primary structure comprises 1381 residues: Hepatocyte growth factor receptor (1381 aa).

An N-terminal signal peptide occupies residues 1-24 (MKAPAVLAPGILVLLFTLVQRSNG). Over 25–934 (ECKEALTKSE…VQPDQNFTGL (910 aa)) the chain is Extracellular. A Sema domain is found at 27-515 (KEALTKSEMN…TGKKITKIPL (489 aa)). Asparagine 45 is a glycosylation site (N-linked (GlcNAc...) asparagine). Intrachain disulfides connect cysteine 95–cysteine 101, cysteine 98–cysteine 160, cysteine 133–cysteine 141, and cysteine 172–cysteine 175. The N-linked (GlcNAc...) asparagine glycan is linked to asparagine 106. An N-linked (GlcNAc...) asparagine glycan is attached at asparagine 149. Residue asparagine 202 is glycosylated (N-linked (GlcNAc...) asparagine). 2 disulfide bridges follow: cysteine 298/cysteine 363 and cysteine 385/cysteine 397. Asparagine 399 carries an N-linked (GlcNAc...) asparagine glycan. 4 cysteine pairs are disulfide-bonded: cysteine 520/cysteine 538, cysteine 526/cysteine 561, cysteine 529/cysteine 545, and cysteine 541/cysteine 551. IPT/TIG domains lie at 563–655 (PTIY…FSYV), 657–739 (PIIT…FSYR), and 742–836 (PIVY…LIYV). O-linked (Man) threonine glycosylation is present at threonine 582. Asparagine 607 and asparagine 635 each carry an N-linked (GlcNAc...) asparagine glycan. O-linked (Man) threonine glycosylation is found at threonine 676 and threonine 761. N-linked (GlcNAc...) asparagine glycans are attached at residues asparagine 785, asparagine 879, and asparagine 930. Residues 935–955 (VAGVVSISIALLLLLGLFLWL) traverse the membrane as a helical segment. At 956–1381 (KKKKQIKDLG…QDNTDGEVDT (426 aa)) the chain is on the cytoplasmic side. Serine 966 is modified (phosphoserine). Threonine 977 is subject to Phosphothreonine. A phosphoserine mark is found at serine 990, serine 997, and serine 1000. Tyrosine 1003 bears the Phosphotyrosine mark. The Protein kinase domain occupies 1078-1345 (VHFNEVIGRG…RISAIFSTFI (268 aa)). Residues 1084–1092 (IGRGHFGCV) and lysine 1110 each bind ATP. Aspartate 1204 functions as the Proton acceptor in the catalytic mechanism. Residues 1212–1381 (LDEKFTVKVA…QDNTDGEVDT (170 aa)) form an interaction with RANBP9 region. At tyrosine 1230 the chain carries Phosphotyrosine. 2 positions are modified to phosphotyrosine; by autocatalysis: tyrosine 1234 and tyrosine 1235. Threonine 1289 carries the phosphothreonine modification. The interval 1320–1359 (WHPKAEMRPSFSELVSRISAIFSTFIGEHYVHVNATYVNV) is interaction with MUC20. 2 positions are modified to phosphotyrosine; by autocatalysis: tyrosine 1349 and tyrosine 1356. Tyrosine 1365 is subject to Phosphotyrosine.

The protein belongs to the protein kinase superfamily. Tyr protein kinase family. As to quaternary structure, heterodimer made of an alpha chain (50 kDa) and a beta chain (145 kDa) which are disulfide linked. Binds PLXNB1. Interacts when phosphorylated with downstream effectors including STAT3, PIK3R1, SRC, PCLG1, GRB2 and GAB1. Interacts with SPSB1, SPSB2 and SPSB4. Interacts with INPP5D/SHIP1. When phosphorylated at Tyr-1356, interacts with INPPL1/SHIP2. Interacts with RANBP9 and RANBP10, as well as SPSB1, SPSB2, SPSB3 and SPSB4. SPSB1 binding occurs in the presence and in the absence of HGF, however HGF treatment has a positive effect on this interaction. Interacts with MUC20; prevents interaction with GRB2 and suppresses hepatocyte growth factor-induced cell proliferation. Interacts with GRB10. Interacts with PTPN1 and PTPN2. Interacts with HSP90AA1 and HSP90AB1; the interaction suppresses MET kinase activity. Interacts with tensin TNS3. Interacts (when phosphorylated) with tensin TNS4 (via SH2 domain); the interaction increases MET protein stability by inhibiting MET endocytosis and subsequent lysosomal degradation. Autophosphorylated in response to ligand binding on Tyr-1234 and Tyr-1235 in the kinase domain leading to further phosphorylation of Tyr-1349 and Tyr-1356 in the C-terminal multifunctional docking site. Dephosphorylated by PTPRJ at Tyr-1349 and Tyr-1365. Dephosphorylated by PTPN1 and PTPN2. Post-translationally, ubiquitinated. Ubiquitination by CBL regulates the receptor stability and activity through proteasomal degradation. In terms of processing, O-mannosylation of IPT/TIG domains by TMEM260 is required for protein maturation. O-mannosylated residues are composed of single mannose glycans that are not elongated or modified.

It localises to the membrane. The enzyme catalyses L-tyrosyl-[protein] + ATP = O-phospho-L-tyrosyl-[protein] + ADP + H(+). Receptor tyrosine kinase that transduces signals from the extracellular matrix into the cytoplasm by binding to hepatocyte growth factor/HGF ligand. Regulates many physiological processes including proliferation, scattering, morphogenesis and survival. Ligand binding at the cell surface induces autophosphorylation of MET on its intracellular domain that provides docking sites for downstream signaling molecules. Following activation by ligand, interacts with the PI3-kinase subunit PIK3R1, PLCG1, SRC, GRB2, STAT3 or the adapter GAB1. Recruitment of these downstream effectors by MET leads to the activation of several signaling cascades including the RAS-ERK, PI3 kinase-AKT, or PLCgamma-PKC. The RAS-ERK activation is associated with the morphogenetic effects while PI3K/AKT coordinates prosurvival effects. During embryonic development, MET signaling plays a role in gastrulation, development and migration of muscles and neuronal precursors, angiogenesis and kidney formation. In adults, participates in wound healing as well as organ regeneration and tissue remodeling. Also promotes differentiation and proliferation of hematopoietic cells. The polypeptide is Hepatocyte growth factor receptor (MET) (Callithrix jacchus (White-tufted-ear marmoset)).